The primary structure comprises 335 residues: Holliday junction branch migration complex subunit RuvB (335 aa).

Residues 1 to 183 (MDERIISSET…FGVIDHLEFY (183 aa)) are large ATPase domain (RuvB-L). Residues L22, R23, G64, K67, T68, T69, 130–132 (EDY), R173, Y183, and R220 each bind ATP. Position 68 (T68) interacts with Mg(2+). Positions 184-254 (TEEQLTEIVL…LAKEALTLLQ (71 aa)) are small ATPAse domain (RuvB-S). Residues 257-335 (PRGLDTIDQK…HLGISYEKEV (79 aa)) form a head domain (RuvB-H) region. DNA-binding residues include R293, R312, and R317.

It belongs to the RuvB family. Homohexamer. Forms an RuvA(8)-RuvB(12)-Holliday junction (HJ) complex. HJ DNA is sandwiched between 2 RuvA tetramers; dsDNA enters through RuvA and exits via RuvB. An RuvB hexamer assembles on each DNA strand where it exits the tetramer. Each RuvB hexamer is contacted by two RuvA subunits (via domain III) on 2 adjacent RuvB subunits; this complex drives branch migration. In the full resolvosome a probable DNA-RuvA(4)-RuvB(12)-RuvC(2) complex forms which resolves the HJ.

The protein resides in the cytoplasm. The catalysed reaction is ATP + H2O = ADP + phosphate + H(+). Its function is as follows. The RuvA-RuvB-RuvC complex processes Holliday junction (HJ) DNA during genetic recombination and DNA repair, while the RuvA-RuvB complex plays an important role in the rescue of blocked DNA replication forks via replication fork reversal (RFR). RuvA specifically binds to HJ cruciform DNA, conferring on it an open structure. The RuvB hexamer acts as an ATP-dependent pump, pulling dsDNA into and through the RuvAB complex. RuvB forms 2 homohexamers on either side of HJ DNA bound by 1 or 2 RuvA tetramers; 4 subunits per hexamer contact DNA at a time. Coordinated motions by a converter formed by DNA-disengaged RuvB subunits stimulates ATP hydrolysis and nucleotide exchange. Immobilization of the converter enables RuvB to convert the ATP-contained energy into a lever motion, pulling 2 nucleotides of DNA out of the RuvA tetramer per ATP hydrolyzed, thus driving DNA branch migration. The RuvB motors rotate together with the DNA substrate, which together with the progressing nucleotide cycle form the mechanistic basis for DNA recombination by continuous HJ branch migration. Branch migration allows RuvC to scan DNA until it finds its consensus sequence, where it cleaves and resolves cruciform DNA. This chain is Holliday junction branch migration complex subunit RuvB, found in Listeria innocua serovar 6a (strain ATCC BAA-680 / CLIP 11262).